The sequence spans 251 residues: Tryptophan synthase alpha chain (251 aa).

Active-site proton acceptor residues include glutamate 46 and aspartate 57.

It belongs to the TrpA family. As to quaternary structure, tetramer of two alpha and two beta chains.

It carries out the reaction (1S,2R)-1-C-(indol-3-yl)glycerol 3-phosphate + L-serine = D-glyceraldehyde 3-phosphate + L-tryptophan + H2O. It functions in the pathway amino-acid biosynthesis; L-tryptophan biosynthesis; L-tryptophan from chorismate: step 5/5. Functionally, the alpha subunit is responsible for the aldol cleavage of indoleglycerol phosphate to indole and glyceraldehyde 3-phosphate. This is Tryptophan synthase alpha chain from Karelsulcia muelleri (strain GWSS) (Sulcia muelleri).